Consider the following 156-residue polypeptide: Calglandulin (156 aa).

EF-hand domains are found at residues 8–43 (EQITEYKGIFEMFDEEGNGLVKTDDLESLMSLIGIN), 44–79 (PTKRDLANMAKDVDKDKKGTFNCDGFLVLMGIYHEK), 82–117 (NQDEELRAAFKVFDKEHKGYIEWDTLKYVLMNAGEP), and 118–153 (LNEHEAELMMKEADKDGDGTIDYEEFVAMMTGESFK). The Ca(2+) site is built by Asp-131, Asp-133, Asp-135, Thr-137, and Glu-142.

Belongs to the calmodulin family. Calglandulin subfamily. In terms of tissue distribution, expressed by the venom gland.

It is found in the cytoplasm. In terms of biological role, may be involved in the cellular control mechanism of the secretion of toxins from the gland into the venom. The protein is Calglandulin of Hoplocephalus stephensii (Stephens's banded snake).